A 72-amino-acid chain; its full sequence is Translation initiation factor IF-1 (72 aa).

Positions 1 to 72 (MSKDDVIEVE…TRGRIIYRHK (72 aa)) constitute an S1-like domain.

It belongs to the IF-1 family. Component of the 30S ribosomal translation pre-initiation complex which assembles on the 30S ribosome in the order IF-2 and IF-3, IF-1 and N-formylmethionyl-tRNA(fMet); mRNA recruitment can occur at any time during PIC assembly.

The protein resides in the cytoplasm. Functionally, one of the essential components for the initiation of protein synthesis. Stabilizes the binding of IF-2 and IF-3 on the 30S subunit to which N-formylmethionyl-tRNA(fMet) subsequently binds. Helps modulate mRNA selection, yielding the 30S pre-initiation complex (PIC). Upon addition of the 50S ribosomal subunit IF-1, IF-2 and IF-3 are released leaving the mature 70S translation initiation complex. In Carboxydothermus hydrogenoformans (strain ATCC BAA-161 / DSM 6008 / Z-2901), this protein is Translation initiation factor IF-1.